The sequence spans 425 residues: Protein PTI1 (425 aa).

S272 carries the post-translational modification Phosphoserine.

Component of the cleavage and polyadenylation factor (CPF) complex, which is composed of PTI1, SYC1, SSU72, GLC7, MPE1, REF2, PFS2, PTA1, YSH1/BRR5, SWD2, CFT2/YDH1, YTH1, CFT1/YHH1, FIP1 and PAP1. Component of the APT complex, which is a subcomplex of CPF, and is composed of PTI1, SYC1, SSU72, GLC7, REF2, PTA1 and SWD2.

It localises to the nucleus. Its function is as follows. Component of the cleavage and polyadenylation factor (CPF) complex, which plays a key role in polyadenylation-dependent pre-mRNA 3'-end formation and cooperates with cleavage factors including the CFIA complex and NAB4/CFIB. Component of the APT complex, which may be involved in polyadenylation-independent transcript 3'-end formation. PTI1 is required for 3'-end formation of snoRNAs. The chain is Protein PTI1 (PTI1) from Saccharomyces cerevisiae (strain ATCC 204508 / S288c) (Baker's yeast).